A 540-amino-acid polypeptide reads, in one-letter code: Chaperonin GroEL 1 (540 aa).

Residues 29–32, 86–90, Gly-413, 478–480, and Asp-494 each bind ATP; these read TLGP, DGTTT, and NAA.

This sequence belongs to the chaperonin (HSP60) family. As to quaternary structure, forms a cylinder of 14 subunits composed of two heptameric rings stacked back-to-back. Interacts with the co-chaperonin GroES.

Its subcellular location is the cytoplasm. The enzyme catalyses ATP + H2O + a folded polypeptide = ADP + phosphate + an unfolded polypeptide.. In terms of biological role, together with its co-chaperonin GroES, plays an essential role in assisting protein folding. The GroEL-GroES system forms a nano-cage that allows encapsulation of the non-native substrate proteins and provides a physical environment optimized to promote and accelerate protein folding. In Mycobacterium sp. (strain JLS), this protein is Chaperonin GroEL 1.